A 217-amino-acid chain; its full sequence is Somatotropin (217 aa).

A signal peptide spans 1-26 (MMAAGPRTSLLLAFALLCLPWTQVVG). His46 lines the Zn(2+) pocket. An intrachain disulfide couples Cys79 to Cys190. Ser132 is modified (phosphoserine). Residue Glu199 coordinates Zn(2+). Cys207 and Cys215 are disulfide-bonded.

The protein belongs to the somatotropin/prolactin family.

It is found in the secreted. Functionally, plays an important role in growth control. Its major role in stimulating body growth is to stimulate the liver and other tissues to secrete IGF1. It stimulates both the differentiation and proliferation of myoblasts. It also stimulates amino acid uptake and protein synthesis in muscle and other tissues. The polypeptide is Somatotropin (GH1) (Bos taurus (Bovine)).